Reading from the N-terminus, the 305-residue chain is UDP-3-O-acyl-N-acetylglucosamine deacetylase (305 aa).

Residues histidine 79, histidine 238, and aspartate 242 each contribute to the Zn(2+) site. Histidine 265 (proton donor) is an active-site residue.

It belongs to the LpxC family. It depends on Zn(2+) as a cofactor.

It carries out the reaction a UDP-3-O-[(3R)-3-hydroxyacyl]-N-acetyl-alpha-D-glucosamine + H2O = a UDP-3-O-[(3R)-3-hydroxyacyl]-alpha-D-glucosamine + acetate. It functions in the pathway glycolipid biosynthesis; lipid IV(A) biosynthesis; lipid IV(A) from (3R)-3-hydroxytetradecanoyl-[acyl-carrier-protein] and UDP-N-acetyl-alpha-D-glucosamine: step 2/6. Its function is as follows. Catalyzes the hydrolysis of UDP-3-O-myristoyl-N-acetylglucosamine to form UDP-3-O-myristoylglucosamine and acetate, the committed step in lipid A biosynthesis. This chain is UDP-3-O-acyl-N-acetylglucosamine deacetylase, found in Citrobacter koseri (strain ATCC BAA-895 / CDC 4225-83 / SGSC4696).